The sequence spans 101 residues: Urease subunit gamma (101 aa).

It belongs to the urease gamma subunit family. As to quaternary structure, heterotrimer of UreA (gamma), UreB (beta) and UreC (alpha) subunits. Three heterotrimers associate to form the active enzyme.

Its subcellular location is the cytoplasm. The catalysed reaction is urea + 2 H2O + H(+) = hydrogencarbonate + 2 NH4(+). Its pathway is nitrogen metabolism; urea degradation; CO(2) and NH(3) from urea (urease route): step 1/1. In Geobacillus kaustophilus (strain HTA426), this protein is Urease subunit gamma.